Here is a 559-residue protein sequence, read N- to C-terminus: Thermosome subunit alpha (559 aa).

Residues Ser536–Ser552 show a composition bias toward basic and acidic residues. A disordered region spans residues Ser536 to Glu559.

It belongs to the TCP-1 chaperonin family. Forms a Heterooligomeric complex of two stacked nine-membered rings; one of alpha and the other of beta subunits.

Molecular chaperone; binds unfolded polypeptides in vitro, and has a weak ATPase activity. This chain is Thermosome subunit alpha (thsA), found in Sulfurisphaera tokodaii (strain DSM 16993 / JCM 10545 / NBRC 100140 / 7) (Sulfolobus tokodaii).